Here is a 516-residue protein sequence, read N- to C-terminus: MRWITRPGWPGNLLALAAGALMPLAQAPFDLWPLALLSLALLYLGLREAPPRAALWRGWCYGFGLYAVGTSWIYISIHDYGAASLPLAGLLTLALMLALAFFFALPAWLWSRWLRRSDAPLADALAFAALWLALEGFRGWFLTGFPWLYAGYSQLEGPLAGLAPLGGVWLLSFALALSAALLVNLPRLLRRPPALLGALVLLLAPWATGLALRGHAWTAPAGAPLKVAAVQGNVEQNLKWDPEQLSAQLLLYRDLTLQRAAPVDLVVWPETAVPILKEYAENYLAGLDRYARPRHMALLTGVPIRRHNAQGEPRYYNGIVVAGEGSGTYLKQKLVPFGEYVPLQEVLRGLIAFFDLPMSDFARGPADQPLLEARGWRIAPYICYEVVYPEFAAGLAARSDLLLTISNDAWFGSSIGPLQHLQMAQMRALEAGRWMIRTTNNGVTALIDPFGRITERLPQFQRAVLYGEVTPMQGLTPYLRWRAWPLAGLAVLLLGWALLRRRAERAAPGPAVEAQR.

A run of 6 helical transmembrane segments spans residues 24 to 44, 58 to 78, 90 to 110, 125 to 145, 163 to 183, and 192 to 212; these read LAQA…LLYL, GWCY…ISIH, LLTL…AWLW, LAFA…LTGF, APLG…ALLV, and PPAL…GLAL. Residues 230–471 enclose the CN hydrolase domain; it reads VQGNVEQNLK…RAVLYGEVTP (242 aa). Glutamate 270 serves as the catalytic Proton acceptor. Residue lysine 331 is part of the active site. Cysteine 383 acts as the Nucleophile in catalysis. Residues 479–499 form a helical membrane-spanning segment; it reads LRWRAWPLAGLAVLLLGWALL.

Belongs to the CN hydrolase family. Apolipoprotein N-acyltransferase subfamily.

The protein resides in the cell inner membrane. The enzyme catalyses N-terminal S-1,2-diacyl-sn-glyceryl-L-cysteinyl-[lipoprotein] + a glycerophospholipid = N-acyl-S-1,2-diacyl-sn-glyceryl-L-cysteinyl-[lipoprotein] + a 2-acyl-sn-glycero-3-phospholipid + H(+). It functions in the pathway protein modification; lipoprotein biosynthesis (N-acyl transfer). Functionally, catalyzes the phospholipid dependent N-acylation of the N-terminal cysteine of apolipoprotein, the last step in lipoprotein maturation. This is Apolipoprotein N-acyltransferase from Azotobacter vinelandii (strain DJ / ATCC BAA-1303).